A 1363-amino-acid polypeptide reads, in one-letter code: Homeobox protein 13 (1363 aa).

Residues 15 to 73 (FVMEQIQQQQQQQQQQQQQQQQQQQQQQQQQQQQLQQQQQQQQQQQQQQQQQQQQQQQN) are a coiled coil. Disordered stretches follow at residues 66–96 (QQQQ…STVP), 120–177 (SQHA…INGS), 308–437 (INGT…YHGG), 621–731 (LNSP…QHQQ), 765–818 (HHHH…PQHS), 857–911 (SINS…SNSI), 1001–1137 (QNYN…TLIN), 1166–1202 (NFIN…KRMR), and 1270–1341 (ISFG…TLIS). Polar residues predominate over residues 73-96 (NPKMNNQPNETRLPSPPLLNSTVP). A compositionally biased stretch (low complexity) spans 132–147 (SLNSSNNNNNNNFNNS). Polar residues predominate over residues 148 to 158 (RPTFSSCSGNS). Composition is skewed to low complexity over residues 159–177 (NNTT…INGS) and 315–326 (SNHSNNNNNNNN). Residues 327 to 339 (NHHHHHHHHHQKR) show a composition bias toward basic residues. Residues 348–378 (TNHLTPLPLLHKHTNNNNNINNNNNHNHNNI) show a composition bias toward low complexity. Positions 379–393 (LGSPNQLNRSQDFTS) are enriched in polar residues. Composition is skewed to low complexity over residues 394–408 (KNNN…NNKI), 415–426 (NKGSPNQNSSEN), 641–693 (NNNS…NNNI), 709–731 (HHQQ…QHQQ), and 770–793 (QQQQ…SNHN). Positions 738 to 789 (QQQLQIQYQQQQTHNNNLNQTQQLYYNHHHHQQQQQQQQQQQQHNNNNNNNN) form a coiled coil. Polar residues-rich tracts occupy residues 794-818 (SVLT…PQHS) and 857-883 (SINS…QKNR). Low complexity-rich tracts occupy residues 889-911 (ILNS…SNSI), 1001-1031 (QNYN…NNNF), and 1045-1063 (NINN…NNNN). Residues 1064-1078 (KNDKNESEFESKEKL) are compositionally biased toward basic and acidic residues. A compositionally biased stretch (polar residues) spans 1081–1095 (PFGSSIPNIVNNEQL). 3 stretches are compositionally biased toward low complexity: residues 1096–1116 (SPYS…PQWS), 1123–1137 (TSSS…TLIN), and 1166–1177 (NFINNNSNNNNN). Acidic residues predominate over residues 1179–1195 (EIDDDDEDGIDGIEGED). Residues 1198-1261 (KKRMRKTTRP…NRRTKDKLKN (64 aa)) constitute a DNA-binding region (homeobox). Residues 1275 to 1294 (SSTSSTQTSTNSPSSQLSPL) show a composition bias toward low complexity. Polar residues predominate over residues 1297 to 1316 (NMNNNDQQSISTPSLILSQI). The segment covering 1317–1334 (NNNQNNNQNNNNNNNTNN) has biased composition (low complexity).

It localises to the nucleus. Its function is as follows. Putative transcription factor. The polypeptide is Homeobox protein 13 (hbx13) (Dictyostelium discoideum (Social amoeba)).